A 198-amino-acid polypeptide reads, in one-letter code: MYYPEPIARLIESFSKLPGIGQKTATRLAFYTIGMEDQDVNEFAKNLLSAKRDLSFCSICGNLTESDPCAICTDPTRDRTTILVVEESKDVLAMEKIREYRGLYHVLHGTISPMNGISPDEINVKTLITRLMDSEVKEVIIATNATSDGEATAMYLARMIKPAGIKVTRLARGLAVGSDIEYADEITLSKAVENRLEI.

The C4-type zinc finger occupies 57 to 72 (CSICGNLTESDPCAIC). A Toprim domain is found at 80–175 (TTILVVEESK…KVTRLARGLA (96 aa)).

It belongs to the RecR family.

Functionally, may play a role in DNA repair. It seems to be involved in an RecBC-independent recombinational process of DNA repair. It may act with RecF and RecO. This Lactococcus lactis subsp. lactis (strain IL1403) (Streptococcus lactis) protein is Recombination protein RecR.